Here is a 429-residue protein sequence, read N- to C-terminus: Glucose-1-phosphate adenylyltransferase (429 aa).

Residues glycine 162, 177–178, and serine 209 contribute to the alpha-D-glucose 1-phosphate site; that span reads EK.

Belongs to the bacterial/plant glucose-1-phosphate adenylyltransferase family. Homotetramer.

The catalysed reaction is alpha-D-glucose 1-phosphate + ATP + H(+) = ADP-alpha-D-glucose + diphosphate. Its pathway is glycan biosynthesis; glycogen biosynthesis. Functionally, involved in the biosynthesis of ADP-glucose, a building block required for the elongation reactions to produce glycogen. Catalyzes the reaction between ATP and alpha-D-glucose 1-phosphate (G1P) to produce pyrophosphate and ADP-Glc. The chain is Glucose-1-phosphate adenylyltransferase from Rippkaea orientalis (strain PCC 8801 / RF-1) (Cyanothece sp. (strain PCC 8801)).